A 98-amino-acid polypeptide reads, in one-letter code: MSLVYMNIMIAFSISLLGLLMYRSHLMSSLLCLEGMMLALFILSTIMILNIHFTLASMIPIILLVFAACEAAVGLSLLVMVSNTYGVDYVQNLNLLQC.

Helical transmembrane passes span 1-21 (MSLV…GLLM), 25-45 (HLMS…ILST), and 67-87 (AACE…TYGV).

The protein belongs to the complex I subunit 4L family. As to quaternary structure, core subunit of respiratory chain NADH dehydrogenase (Complex I) which is composed of 45 different subunits.

The protein resides in the mitochondrion inner membrane. It catalyses the reaction a ubiquinone + NADH + 5 H(+)(in) = a ubiquinol + NAD(+) + 4 H(+)(out). Its function is as follows. Core subunit of the mitochondrial membrane respiratory chain NADH dehydrogenase (Complex I) which catalyzes electron transfer from NADH through the respiratory chain, using ubiquinone as an electron acceptor. Part of the enzyme membrane arm which is embedded in the lipid bilayer and involved in proton translocation. This Talpa europaea (European mole) protein is NADH-ubiquinone oxidoreductase chain 4L (MT-ND4L).